The primary structure comprises 292 residues: Zinc metalloproteinase nas-3 (292 aa).

An N-terminal signal peptide occupies residues 1 to 16; sequence MYRFIIFFSLLALTAS. The region spanning 56–249 is the Peptidase M12A domain; it reads RGIAIHPWQW…RNINTLYKCN (194 aa). Intrachain disulfides connect cysteine 103–cysteine 248 and cysteine 128–cysteine 158. Histidine 169 serves as a coordination point for Zn(2+). Glutamate 170 is an active-site residue. Residues histidine 173 and histidine 179 each contribute to the Zn(2+) site.

Zn(2+) is required as a cofactor.

Its subcellular location is the secreted. Its function is as follows. Metalloprotease. This Caenorhabditis elegans protein is Zinc metalloproteinase nas-3 (nas-3).